Reading from the N-terminus, the 322-residue chain is PI-PLC X domain-containing protein 3 (322 aa).

The PI-PLC X-box domain occupies 22–197; that stretch reads TLHGIPLTNL…EYQVLVFYHN (176 aa). Active-site residues include H37 and H114.

The chain is PI-PLC X domain-containing protein 3 (plcxd3) from Danio rerio (Zebrafish).